Reading from the N-terminus, the 34-residue chain is Protein HRURF (34 aa).

Its function is as follows. May function as an inhibitory translational control element that can negatively regulate protein translation of HR gene. This Homo sapiens (Human) protein is Protein HRURF.